Consider the following 185-residue polypeptide: Threonylcarbamoyl-AMP synthase (185 aa).

In terms of domain architecture, YrdC-like spans 4–185; that stretch reads DWRVQQVARV…LRSGEVIRPA (182 aa).

It belongs to the SUA5 family. TsaC subfamily.

Its subcellular location is the cytoplasm. The enzyme catalyses L-threonine + hydrogencarbonate + ATP = L-threonylcarbamoyladenylate + diphosphate + H2O. Required for the formation of a threonylcarbamoyl group on adenosine at position 37 (t(6)A37) in tRNAs that read codons beginning with adenine. Catalyzes the conversion of L-threonine, HCO(3)(-)/CO(2) and ATP to give threonylcarbamoyl-AMP (TC-AMP) as the acyladenylate intermediate, with the release of diphosphate. The polypeptide is Threonylcarbamoyl-AMP synthase (Stutzerimonas stutzeri (strain A1501) (Pseudomonas stutzeri)).